The chain runs to 130 residues: Protein BLT4 (130 aa).

An N-terminal signal peptide occupies residues 1–25; that stretch reads MARTAATKLALVPLVAAMLLVAADA. Positions 80–130 are disordered; the sequence is VPARTTPAGPQASPPGAASASPTRSAPVSTALRSTDRTRAPHISSDRRLVG. The span at 84–110 shows a compositional bias: low complexity; that stretch reads TTPAGPQASPPGAASASPTRSAPVSTA. The span at 113 to 130 shows a compositional bias: basic and acidic residues; sequence STDRTRAPHISSDRRLVG.

This sequence belongs to the plant LTP family. As to expression, shoot meristem.

Functionally, possible dehydrative stress responsive protein. Not shown to have lipid transfer activity. This chain is Protein BLT4 (BLT4), found in Hordeum vulgare (Barley).